The following is a 393-amino-acid chain: Fructose-bisphosphate aldolase 4, cytosolic (393 aa).

Arg-73 is a binding site for substrate. Residue Cys-207 is modified to S-glutathionyl cysteine; transient; alternate. The residue at position 207 (Cys-207) is an S-nitrosocysteine; transient; alternate. The active-site Proton acceptor is Glu-217. Lys-259 functions as the Schiff-base intermediate with dihydroxyacetone-P in the catalytic mechanism. Residues 301-303 and Arg-333 each bind substrate; that span reads SGG.

This sequence belongs to the class I fructose-bisphosphate aldolase family. As to quaternary structure, homotetramer. Post-translationally, S-glutathionylated at Cys-207. S-nitrosylated at Cys-207. In terms of tissue distribution, highly expressed in flowers.

The protein localises to the cytoplasm. The protein resides in the cytosol. It carries out the reaction beta-D-fructose 1,6-bisphosphate = D-glyceraldehyde 3-phosphate + dihydroxyacetone phosphate. The protein operates within carbohydrate degradation; glycolysis; D-glyceraldehyde 3-phosphate and glycerone phosphate from D-glucose: step 4/4. Fructose-bisphosphate aldolase that plays a key role in glycolysis and gluconeogenesis. The polypeptide is Fructose-bisphosphate aldolase 4, cytosolic (Arabidopsis thaliana (Mouse-ear cress)).